We begin with the raw amino-acid sequence, 102 residues long: Small ribosomal subunit protein uS10 (102 aa).

This sequence belongs to the universal ribosomal protein uS10 family. In terms of assembly, part of the 30S ribosomal subunit.

Functionally, involved in the binding of tRNA to the ribosomes. The polypeptide is Small ribosomal subunit protein uS10 (Pyrococcus abyssi (strain GE5 / Orsay)).